Consider the following 112-residue polypeptide: Large ribosomal subunit protein uL22 (112 aa).

It belongs to the universal ribosomal protein uL22 family. Part of the 50S ribosomal subunit.

In terms of biological role, this protein binds specifically to 23S rRNA; its binding is stimulated by other ribosomal proteins, e.g. L4, L17, and L20. It is important during the early stages of 50S assembly. It makes multiple contacts with different domains of the 23S rRNA in the assembled 50S subunit and ribosome. Functionally, the globular domain of the protein is located near the polypeptide exit tunnel on the outside of the subunit, while an extended beta-hairpin is found that lines the wall of the exit tunnel in the center of the 70S ribosome. In Desulfovibrio desulfuricans (strain ATCC 27774 / DSM 6949 / MB), this protein is Large ribosomal subunit protein uL22.